The chain runs to 457 residues: Siroheme synthase 2 (457 aa).

Residues 1 to 204 (MDHLPIFCQL…DDRQAVADTT (204 aa)) form a precorrin-2 dehydrogenase /sirohydrochlorin ferrochelatase region. NAD(+)-binding positions include 22-23 (DV) and 43-44 (LD). Residue serine 128 is modified to Phosphoserine. The uroporphyrinogen-III C-methyltransferase stretch occupies residues 216–457 (GEVVLVGAGP…RDKLNWFSNH (242 aa)). Proline 225 is a binding site for S-adenosyl-L-methionine. The active-site Proton acceptor is aspartate 248. Lysine 270 (proton donor) is an active-site residue. S-adenosyl-L-methionine is bound by residues 301-303 (GGD), isoleucine 306, 331-332 (TA), methionine 382, and glycine 411.

This sequence in the N-terminal section; belongs to the precorrin-2 dehydrogenase / sirohydrochlorin ferrochelatase family. It in the C-terminal section; belongs to the precorrin methyltransferase family.

It carries out the reaction uroporphyrinogen III + 2 S-adenosyl-L-methionine = precorrin-2 + 2 S-adenosyl-L-homocysteine + H(+). The catalysed reaction is precorrin-2 + NAD(+) = sirohydrochlorin + NADH + 2 H(+). It catalyses the reaction siroheme + 2 H(+) = sirohydrochlorin + Fe(2+). It functions in the pathway cofactor biosynthesis; adenosylcobalamin biosynthesis; precorrin-2 from uroporphyrinogen III: step 1/1. It participates in cofactor biosynthesis; adenosylcobalamin biosynthesis; sirohydrochlorin from precorrin-2: step 1/1. The protein operates within porphyrin-containing compound metabolism; siroheme biosynthesis; precorrin-2 from uroporphyrinogen III: step 1/1. Its pathway is porphyrin-containing compound metabolism; siroheme biosynthesis; siroheme from sirohydrochlorin: step 1/1. It functions in the pathway porphyrin-containing compound metabolism; siroheme biosynthesis; sirohydrochlorin from precorrin-2: step 1/1. Multifunctional enzyme that catalyzes the SAM-dependent methylations of uroporphyrinogen III at position C-2 and C-7 to form precorrin-2 via precorrin-1. Then it catalyzes the NAD-dependent ring dehydrogenation of precorrin-2 to yield sirohydrochlorin. Finally, it catalyzes the ferrochelation of sirohydrochlorin to yield siroheme. The polypeptide is Siroheme synthase 2 (Klebsiella pneumoniae subsp. pneumoniae (strain ATCC 700721 / MGH 78578)).